Here is a 332-residue protein sequence, read N- to C-terminus: Methionyl-tRNA formyltransferase (332 aa).

Residue Ser-124 to Pro-127 coordinates (6S)-5,6,7,8-tetrahydrofolate.

This sequence belongs to the Fmt family.

The enzyme catalyses L-methionyl-tRNA(fMet) + (6R)-10-formyltetrahydrofolate = N-formyl-L-methionyl-tRNA(fMet) + (6S)-5,6,7,8-tetrahydrofolate + H(+). In terms of biological role, attaches a formyl group to the free amino group of methionyl-tRNA(fMet). The formyl group appears to play a dual role in the initiator identity of N-formylmethionyl-tRNA by promoting its recognition by IF2 and preventing the misappropriation of this tRNA by the elongation apparatus. The chain is Methionyl-tRNA formyltransferase from Polynucleobacter necessarius subsp. necessarius (strain STIR1).